The chain runs to 257 residues: Flavodoxin/ferredoxin--NADP reductase (257 aa).

The FAD-binding FR-type domain occupies 2–110; the sequence is NPWINANVLK…EKSFGFFTLD (109 aa). Residues 59–62, tyrosine 75, 83–85, and threonine 125 each bind FAD; these read RAYS and KLS. Residues 152 to 153, 182 to 183, arginine 193, 223 to 225, and aspartate 229 contribute to the NADP(+) site; these read VR, SR, and NPA. 256-257 contributes to the FAD binding site; it reads YW.

The protein belongs to the ferredoxin--NADP reductase type 1 family. FAD is required as a cofactor.

It localises to the cytoplasm. The catalysed reaction is 2 reduced [2Fe-2S]-[ferredoxin] + NADP(+) + H(+) = 2 oxidized [2Fe-2S]-[ferredoxin] + NADPH. The enzyme catalyses reduced [flavodoxin] + NADP(+) = oxidized [flavodoxin] + NADPH + 2 H(+). Transports electrons between flavodoxin or ferredoxin and NADPH. The protein is Flavodoxin/ferredoxin--NADP reductase (fpr) of Buchnera aphidicola subsp. Schizaphis graminum (strain Sg).